The primary structure comprises 300 residues: MTENTSTRCGYVAIVGRPNVGKSTLLNHILGQKLAITSRKPQTTRHNMLGIKTEGDVQAIYVDTPGMHKANDKALNRYMNRNASAALKDVDVVIFVVDRTRWTDEDQLVLERVQYVTGPLIIAVNKTDRMEEKAELIPHLQWLQEQLPNAEVMPISAQQGHNLDALEAQIAKHLPENDHFFPEDQITDRSSRFLAAELVREKIMRQLGAELPYQITVEIEEFKQQGHVLHIHALILVERDGQKKIIIGDKGERIKRIGSEARKDMEVLFDSKVMLNLWVKVKGGWSDDERALRSLGYGDL.

The 169-residue stretch at 8–176 (RCGYVAIVGR…EAQIAKHLPE (169 aa)) folds into the Era-type G domain. The tract at residues 16–23 (GRPNVGKS) is G1. GTP is bound at residue 16-23 (GRPNVGKS). The interval 42–46 (QTTRH) is G2. The segment at 63 to 66 (DTPG) is G3. GTP-binding positions include 63 to 67 (DTPGM) and 125 to 128 (NKTD). The interval 125 to 128 (NKTD) is G4. The segment at 155–157 (ISA) is G5. Positions 199 to 283 (VREKIMRQLG…MLNLWVKVKG (85 aa)) constitute a KH type-2 domain.

This sequence belongs to the TRAFAC class TrmE-Era-EngA-EngB-Septin-like GTPase superfamily. Era GTPase family. In terms of assembly, monomer.

Its subcellular location is the cytoplasm. The protein resides in the cell inner membrane. In terms of biological role, an essential GTPase that binds both GDP and GTP, with rapid nucleotide exchange. Plays a role in 16S rRNA processing and 30S ribosomal subunit biogenesis and possibly also in cell cycle regulation and energy metabolism. The sequence is that of GTPase Era from Pseudomonas entomophila (strain L48).